Here is a 269-residue protein sequence, read N- to C-terminus: 5'-nucleotidase SurE (269 aa).

A divalent metal cation contacts are provided by Asp8, Asp9, Ser40, and Asn93.

The protein belongs to the SurE nucleotidase family. A divalent metal cation is required as a cofactor.

It localises to the cytoplasm. The catalysed reaction is a ribonucleoside 5'-phosphate + H2O = a ribonucleoside + phosphate. Functionally, nucleotidase that shows phosphatase activity on nucleoside 5'-monophosphates. The polypeptide is 5'-nucleotidase SurE (Caulobacter sp. (strain K31)).